A 143-amino-acid polypeptide reads, in one-letter code: Small ribosomal subunit protein eS12 (143 aa).

This sequence belongs to the eukaryotic ribosomal protein eS12 family.

The protein is Small ribosomal subunit protein eS12 (RPS12) of Hordeum vulgare (Barley).